A 211-amino-acid polypeptide reads, in one-letter code: Probable transcriptional regulatory protein SgaR (211 aa).

Residues 10-126 (EVSIVDQNPV…VLLEAVVSVA (117 aa)) enclose the Response regulatory domain. A 4-aspartylphosphate modification is found at Asp-15. Residues 141 to 206 (NHDPLESLTA…MAVALHVSIN (66 aa)) form the HTH luxR-type domain. The segment at residues 165 to 184 (NLQIAARTGISRNTVKYHLK) is a DNA-binding region (H-T-H motif).

Its function is as follows. Not known. Could act on the sgaA gene expression. This is Probable transcriptional regulatory protein SgaR (sgaR) from Hyphomicrobium methylovorum.